Consider the following 346-residue polypeptide: Inner membrane protein YnjI (346 aa).

Topologically, residues 1–38 (MKKVLLQNHPGSEKYSFNGWEIFNSNFERMIKENKAML) are periplasmic. Residues 39–59 (LCKWGFYLTCVVAVMFVFAAI) form a helical membrane-spanning segment. Topologically, residues 60–68 (TSNGLNERG) are cytoplasmic. Residues 69 to 89 (LITAGCSFLYLLIMMGLIVRA) form a helical membrane-spanning segment. The Periplasmic segment spans residues 90–234 (GFKAKKEQLH…DCANHSSGKS (145 aa)). The helical transmembrane segment at 235–255 (SAKLIWAAELSWMISISSTAF) threads the bilayer. At 256 to 346 (QNGTIEEELA…PWGASSVKYS (91 aa)) the chain is on the cytoplasmic side.

It localises to the cell inner membrane. This is Inner membrane protein YnjI (ynjI) from Escherichia coli (strain K12).